Here is a 190-residue protein sequence, read N- to C-terminus: MTKQVYIIHGYRASSTNHWFPWLKKRLLADGVQADILNMPNPLQPRLEDWLDTLSLYQHTLHENTYLVAHSLGCPAILRFLEHLQLRKQLGGIILVSGFAKSLPTLQMLDEFTQGSFDHQKIIESAKHRAVIASKDDQIVPFSFSKDLAQQIDAALYEVQHGGHFLEDEGFTSLPIVYDVLTSYFSKETR.

Active-site charge relay system residues include serine 71, aspartate 137, and histidine 164.

Belongs to the RBBP9 family.

This chain is Putative hydrolase YdeN (ydeN), found in Bacillus subtilis (strain 168).